A 112-amino-acid chain; its full sequence is Large ribosomal subunit protein uL22 (112 aa).

The protein belongs to the universal ribosomal protein uL22 family. Part of the 50S ribosomal subunit.

Its function is as follows. This protein binds specifically to 23S rRNA; its binding is stimulated by other ribosomal proteins, e.g. L4, L17, and L20. It is important during the early stages of 50S assembly. It makes multiple contacts with different domains of the 23S rRNA in the assembled 50S subunit and ribosome. Functionally, the globular domain of the protein is located near the polypeptide exit tunnel on the outside of the subunit, while an extended beta-hairpin is found that lines the wall of the exit tunnel in the center of the 70S ribosome. The chain is Large ribosomal subunit protein uL22 from Finegoldia magna (strain ATCC 29328 / DSM 20472 / WAL 2508) (Peptostreptococcus magnus).